The primary structure comprises 1176 residues: Growth-differentiation transition protein 5 (1176 aa).

The N-terminal stretch at 1–25 (MKNNFFKKTIILLIFLSIFILYSNA) is a signal peptide. Over 26–913 (DEETITTPPG…DVPANENTLN (888 aa)) the chain is Extracellular. A helical transmembrane segment spans residues 914-934 (LLTIVLPICSAVVVASSVMLG). Topologically, residues 935-1176 (RLFYKKKFKK…NVGYNVHEYF (242 aa)) are cytoplasmic. Low complexity-rich tracts occupy residues 965–974 (SNIENKSESI) and 1053–1066 (PQIS…SIPS). Disordered regions lie at residues 965-985 (SNIE…EQKE) and 1050-1080 (VDTP…PPST). Over residues 1067 to 1078 (SSPPPPPLPLPP) the composition is skewed to pro residues.

Belongs to the GDT family.

The protein resides in the membrane. The protein is Growth-differentiation transition protein 5 (gdt5) of Dictyostelium discoideum (Social amoeba).